The following is a 280-amino-acid chain: MNILIALIPALGWGIFSLIAGKIKNSHPANELMGLGTGALIIGIITAIIHPASSNITIFSLSLISGMFCALGQSGQFISMRNIGISKTMPLSTGFQLIGNTLIGAIIFGEWTSSSQYLIGTLALILIIVGVSLTAISKDKSAKLKMRDIILLLFTSIGYWIYSSFPKAITANAQTLFLPQMIGIFIGSIIFLLVSRQTKVLKEKATWLNIFSGFSYGIAAFSYIFSAQLNGVITAFIYSQLCVIISTLGGIFFIGENKTKSELIATFVGLILIIIGAAIQ.

Helical transmembrane passes span 4–21, 33–52, 56–78, 91–113, 117–136, 149–166, 176–195, 207–229, 233–255, and 262–279; these read LIALIPALGWGIFSLIAG, MGLGTGALIIGIITAIIHPA, ITIFSLSLISGMFCALGQSGQFI, LSTGFQLIGNTLIGAIIFGEWTS, YLIGTLALILIIVGVSLTAI, IILLLFTSIGYWIYSSFP, LFLPQMIGIFIGSIIFLLVS, WLNIFSGFSYGIAAFSYIFSAQL, ITAFIYSQLCVIISTLGGIFFIG, and ELIATFVGLILIIIGAAI.

It belongs to the GRP transporter (TC 2.A.7.5) family.

It is found in the cell membrane. This Lactobacillus helveticus (Lactobacillus suntoryeus) protein is Putative sugar uptake protein.